We begin with the raw amino-acid sequence, 251 residues long: uncharacterized protein (251 aa).

The protein belongs to the FAM243 family.

This is an uncharacterized protein from Mus musculus (Mouse).